The following is a 115-amino-acid chain: UPF0102 protein Kole_1919 (115 aa).

This sequence belongs to the UPF0102 family.

The chain is UPF0102 protein Kole_1919 from Kosmotoga olearia (strain ATCC BAA-1733 / DSM 21960 / TBF 19.5.1).